Consider the following 279-residue polypeptide: Energy-coupling factor transporter ATP-binding protein EcfA1 (279 aa).

Residues I8–D240 form the ABC transporter domain. G41–S48 is an ATP binding site.

Belongs to the ABC transporter superfamily. Energy-coupling factor EcfA family. Forms a stable energy-coupling factor (ECF) transporter complex composed of 2 membrane-embedded substrate-binding proteins (S component), 2 ATP-binding proteins (A component) and 2 transmembrane proteins (T component).

It localises to the cell membrane. Functionally, ATP-binding (A) component of a common energy-coupling factor (ECF) ABC-transporter complex. Unlike classic ABC transporters this ECF transporter provides the energy necessary to transport a number of different substrates. The chain is Energy-coupling factor transporter ATP-binding protein EcfA1 from Mycoplasmoides gallisepticum (strain R(low / passage 15 / clone 2)) (Mycoplasma gallisepticum).